The following is a 142-amino-acid chain: MAAKKVVKQIKLQVEAGKANPAPPVGPALGQAGLNIMEFCKQFNERSKAQIGLKLPVVITVFSDRSFTFITKSPPAALLVKKAIGLETGSPTPHTHKVGKITRKQLEEIAKTKMEDLNANDIDAAVNIIAGTCRSMGVTVEA.

It belongs to the universal ribosomal protein uL11 family. As to quaternary structure, part of the ribosomal stalk of the 50S ribosomal subunit. Interacts with L10 and the large rRNA to form the base of the stalk. L10 forms an elongated spine to which L12 dimers bind in a sequential fashion forming a multimeric L10(L12)X complex. In terms of processing, one or more lysine residues are methylated.

Functionally, forms part of the ribosomal stalk which helps the ribosome interact with GTP-bound translation factors. The chain is Large ribosomal subunit protein uL11 from Leptospira borgpetersenii serovar Hardjo-bovis (strain JB197).